The sequence spans 123 residues: Small ribosomal subunit protein uS12 (123 aa).

A 3-methylthioaspartic acid modification is found at D89.

This sequence belongs to the universal ribosomal protein uS12 family. Part of the 30S ribosomal subunit. Contacts proteins S8 and S17. May interact with IF1 in the 30S initiation complex.

Its function is as follows. With S4 and S5 plays an important role in translational accuracy. In terms of biological role, interacts with and stabilizes bases of the 16S rRNA that are involved in tRNA selection in the A site and with the mRNA backbone. Located at the interface of the 30S and 50S subunits, it traverses the body of the 30S subunit contacting proteins on the other side and probably holding the rRNA structure together. The combined cluster of proteins S8, S12 and S17 appears to hold together the shoulder and platform of the 30S subunit. The protein is Small ribosomal subunit protein uS12 of Maridesulfovibrio salexigens (strain ATCC 14822 / DSM 2638 / NCIMB 8403 / VKM B-1763) (Desulfovibrio salexigens).